Here is a 94-residue protein sequence, read N- to C-terminus: Phosphoribosyl-ATP pyrophosphatase (94 aa).

Belongs to the PRA-PH family.

It localises to the cytoplasm. It carries out the reaction 1-(5-phospho-beta-D-ribosyl)-ATP + H2O = 1-(5-phospho-beta-D-ribosyl)-5'-AMP + diphosphate + H(+). It functions in the pathway amino-acid biosynthesis; L-histidine biosynthesis; L-histidine from 5-phospho-alpha-D-ribose 1-diphosphate: step 2/9. The chain is Phosphoribosyl-ATP pyrophosphatase from Pyrobaculum arsenaticum (strain DSM 13514 / JCM 11321 / PZ6).